The following is a 93-amino-acid chain: Toxin RelE1 (93 aa).

It belongs to the RelE toxin family.

Functionally, toxic component of a type II toxin-antitoxin (TA) system. Its toxic effect is neutralized by coexpression with cognate antitoxin RelB1 but no other ParD or RelB antitoxin. The sequence is that of Toxin RelE1 (relE1) from Caulobacter vibrioides (strain ATCC 19089 / CIP 103742 / CB 15) (Caulobacter crescentus).